Consider the following 244-residue polypeptide: Transcriptional activator protein Anr (244 aa).

A nucleoside 3',5'-cyclic phosphate is bound at residue 21 to 149; the sequence is APLCLPLSLN…RVMSREIRDD (129 aa). An HTH crp-type domain is found at 159–232; the sequence is KTADERIATF…GKEVHILDPI (74 aa). A DNA-binding region (H-T-H motif) is located at residues 192-211; that stretch reads RNEIGNYLGLAVETVSRVFT.

Transcriptional activator of anaerobic gene expression. Regulates the expression of the components of the hydrogen cyanide synthase (HcnABC) in a positive manner. May also act as an iron sensor. The chain is Transcriptional activator protein Anr from Pseudomonas protegens (strain DSM 19095 / LMG 27888 / CFBP 6595 / CHA0).